Here is a 387-residue protein sequence, read N- to C-terminus: Cytochrome b (387 aa).

4 helical membrane-spanning segments follow: residues 32–52 (FGSL…TLAM), 76–98 (WLVR…LHIG), 113–133 (TWAI…LGYV), and 179–199 (FFAL…MHLI). Heme b contacts are provided by H82 and H96. The heme b site is built by H183 and H197. A ubiquinone is bound at residue H202. A run of 4 helical transmembrane segments spans residues 226 to 246 (FIFK…IFVF), 290 to 310 (LLGV…PITD), 322 to 342 (LSKV…QIGA), and 349 to 369 (FIEF…VIVP).

Belongs to the cytochrome b family. In terms of assembly, fungal cytochrome b-c1 complex contains 10 subunits; 3 respiratory subunits, 2 core proteins and 5 low-molecular weight proteins. Cytochrome b-c1 complex is a homodimer. The cofactor is heme b.

The protein localises to the mitochondrion inner membrane. In terms of biological role, component of the ubiquinol-cytochrome c reductase complex (complex III or cytochrome b-c1 complex) that is part of the mitochondrial respiratory chain. The b-c1 complex mediates electron transfer from ubiquinol to cytochrome c. Contributes to the generation of a proton gradient across the mitochondrial membrane that is then used for ATP synthesis. The chain is Cytochrome b (cob) from Emericella nidulans (Aspergillus nidulans).